The following is a 57-amino-acid chain: uncharacterized protein (57 aa).

This is an uncharacterized protein from Halorubrum sp. PV6 (HRPV-1).